Here is a 392-residue protein sequence, read N- to C-terminus: Probable glycerol-3-phosphate dehydrogenase 2 (392 aa).

Residues 42–47 (GSGNWG), phenylalanine 130, lysine 153, and alanine 196 contribute to the NAD(+) site. Position 153 (lysine 153) interacts with substrate. Lysine 248 acts as the Proton acceptor in catalysis. Residues arginine 312 and glutamine 341 each coordinate NAD(+). 312–313 (RN) is a substrate binding site.

The protein belongs to the NAD-dependent glycerol-3-phosphate dehydrogenase family. As to quaternary structure, homodimer.

The protein localises to the cytoplasm. It catalyses the reaction sn-glycerol 3-phosphate + NAD(+) = dihydroxyacetone phosphate + NADH + H(+). In Caenorhabditis elegans, this protein is Probable glycerol-3-phosphate dehydrogenase 2 (gpdh-2).